The sequence spans 470 residues: Isocitrate dehydrogenase (NAD(+)), mitochondrial (470 aa).

Residues 1-26 (MTRVERGRVLARAIERAVAHRASARR) constitute a mitochondrion transit peptide. NAD(+)-binding positions include 138-140 (TVT) and N159. D-threo-isocitrate is bound by residues 157-163 (SPNGAMR), R193, Y200, K275, and D319. D319 contacts Mg(2+). K324 is a binding site for NAD(+). D343 contributes to the D-threo-isocitrate binding site. Mg(2+) contacts are provided by D343 and D347. NAD(+) is bound by residues 380–385 (HGTVAD) and N399.

It belongs to the isocitrate and isopropylmalate dehydrogenases family. As to quaternary structure, forms homodimers. It depends on Mg(2+) as a cofactor. Mn(2+) serves as cofactor.

It is found in the mitochondrion. The enzyme catalyses D-threo-isocitrate + NAD(+) = 2-oxoglutarate + CO2 + NADH. The homodimer exhibits allosteric regulation by isocitrate. Its function is as follows. Performs an essential role in the oxidative function of the tricarboxylic acid cycle and respiration. Catalyzes the decarboxylation of isocitrate to produce 2-oxoglutarate and generate NADH to provide electrons for energy production. This is Isocitrate dehydrogenase (NAD(+)), mitochondrial from Ostreococcus tauri.